Consider the following 3336-residue polypeptide: Pericentrin (3336 aa).

Disordered stretches follow at residues 1 to 71 (MEVE…DICK) and 81 to 100 (GAGGAFAAQPEDCDGEKRED). A compositionally biased stretch (basic and acidic residues) spans 27-37 (TKGDSSHSEKK). Residue Ser-44 is modified to Phosphoserine. Phosphoserine is present on Ser-188. Thr-191 carries the phosphothreonine modification. Residues 258-553 (HTAQLELTQA…RLQGAREDAL (296 aa)) are a coiled coil. Positions 569-589 (KPEKGRKDHVDELEPERHKES) are disordered. 2 positions are modified to phosphoserine: Ser-610 and Ser-682. Coiled coils occupy residues 675-835 (TEHK…DALH) and 1010-1146 (TILT…MLKA). Ser-1245 is modified (phosphoserine). The stretch at 1299 to 1949 (NEETAQVVRK…FLRCQVELDR (651 aa)) forms a coiled coil. Positions 1619–1638 (TLDAGRCPEPPSGSPPEGPE) are disordered. The span at 1626–1636 (PEPPSGSPPEG) shows a compositional bias: pro residues. Phosphoserine is present on residues Ser-1653 and Ser-1712. Residues 1954–1974 (RATAHTRVPGAHPQPRMDGGA) form a disordered region. The residue at position 2044 (Ser-2044) is a Phosphoserine. Positions 2064-2082 (VDLVAQVKQLQEKLNRLLY) form a coiled coil. The disordered stretch occupies residues 2168–2214 (SLIPDEMPDSPIQEKSECQDMSLSSPTSVLGGSRHQSHTAEAGPRKS). Phosphoserine is present on residues Ser-2177, Ser-2192, Ser-2225, Ser-2226, and Ser-2327. The segment covering 2186-2197 (QDMSLSSPTSVL) has biased composition (polar residues). The disordered stretch occupies residues 2318–2374 (SFDSQETLSSPPPGLEGKADRSEKSDGSGFGARLSPGSGGPEAQTAGPVTPASISGR). Residues 2334 to 2343 (GKADRSEKSD) are compositionally biased toward basic and acidic residues. A phosphoserine mark is found at Ser-2352, Ser-2355, Ser-2477, and Ser-2486. Positions 2536–3086 (QEKLQHLRTA…EKLLKHHLQK (551 aa)) form a coiled coil. Disordered regions lie at residues 2875–2910 (LEQSHPRLKEQEGRKAARRSAEARQSPAAAEQWRKW) and 3084–3126 (LQKG…EEAH). Basic and acidic residues-rich tracts occupy residues 2876–2896 (EQSHPRLKEQEGRKAARRSAE) and 3092–3102 (RSERSAWKPDE). Residues 2983–3246 (LSAARLLTSF…ARQPQSPPRT (264 aa)) are interaction with NEK2. A calmodulin-binding region spans residues 3195 to 3208 (RFRTAVRVVIAILR). The disordered stretch occupies residues 3224–3300 (ALAQGKAPRP…RSLTASQDPE (77 aa)). A compositionally biased stretch (low complexity) spans 3226–3240 (AQGKAPRPGPRARQP). Residues 3283–3297 (PSPNSRLERSLTASQ) show a composition bias toward polar residues. A Phosphoserine modification is found at Ser-3302.

In terms of assembly, interacts with CHD3. Interacts with CHD4; the interaction regulates centrosome integrity. Interacts with DISC1 and PCM1. Binds calmodulin. Interacts with CDK5RAP2; the interaction is leading to centrosomal localization of PCNT and CDK5RAP2. Interacts with isoform 1 of NEK2. Interacts with CEP131. Interacts with CCDC13. Interacts with CEP68. Interacts with ATF5; the ATF5:PCNT:polyglutamylated tubulin (PGT) tripartite unites the mother centriole and the pericentriolar material (PCM) in the centrosome. In terms of processing, cleaved during mitotis which leads to removal of CDK5RAP2 from the centrosome and promotes centriole disengagement and subsequent centriole separation. The C-terminal fragment is rapidly degraded following cleavage. Post-translationally, ubiquitinated by TRIM43; leading to proteasomal degradation. As to expression, expressed in all tissues tested, including placenta, liver, kidney and thymus.

It is found in the cytoplasm. It localises to the cytoskeleton. The protein resides in the microtubule organizing center. Its subcellular location is the centrosome. In terms of biological role, integral component of the filamentous matrix of the centrosome involved in the initial establishment of organized microtubule arrays in both mitosis and meiosis. Plays a role, together with DISC1, in the microtubule network formation. Is an integral component of the pericentriolar material (PCM). May play an important role in preventing premature centrosome splitting during interphase by inhibiting NEK2 kinase activity at the centrosome. In Homo sapiens (Human), this protein is Pericentrin (PCNT).